Reading from the N-terminus, the 445-residue chain is Argininosuccinate lyase (445 aa).

Belongs to the lyase 1 family. Argininosuccinate lyase subfamily.

The protein resides in the cytoplasm. The enzyme catalyses 2-(N(omega)-L-arginino)succinate = fumarate + L-arginine. The protein operates within amino-acid biosynthesis; L-arginine biosynthesis; L-arginine from L-ornithine and carbamoyl phosphate: step 3/3. This Xylella fastidiosa (strain Temecula1 / ATCC 700964) protein is Argininosuccinate lyase.